A 32-amino-acid polypeptide reads, in one-letter code: Beta-amanitin proprotein (32 aa).

A propeptide spanning residues 1 to 10 is cleaved from the precursor; the sequence is MSDINATRLP. Positions 11-18 form a cross-link, cyclopeptide (Ile-Pro); that stretch reads IWGIGCDP. Residues 12–16 constitute a cross-link (2'-cysteinyl-6'-hydroxytryptophan sulfoxide (Trp-Cys)); the sequence is WGIGC. Positions 19 to 32 are excised as a propeptide; the sequence is CIGDDVTILLTRGE.

The protein belongs to the MSDIN fungal toxin family. Post-translationally, processed by the macrocyclase-peptidase enzyme POPB to yield a toxic cyclic decapeptide. POPB first removes 10 residues from the N-terminus. Conformational trapping of the remaining peptide forces the enzyme to release this intermediate rather than proceed to macrocyclization. The enzyme rebinds the remaining peptide in a different conformation and catalyzes macrocyclization of the N-terminal 8 residues.

Its function is as follows. Toxin belonging to the bicyclic octapeptides amatoxins that acts by binding non-competitively to RNA polymerase II and greatly slowing the elongation of transcripts from target promoters. The protein is Beta-amanitin proprotein of Amanita phalloides (Death cap).